A 181-amino-acid polypeptide reads, in one-letter code: Large ribosomal subunit protein uL5c (181 aa).

This sequence belongs to the universal ribosomal protein uL5 family. As to quaternary structure, part of the 50S ribosomal subunit; contacts the 5S rRNA.

The protein resides in the plastid. It is found in the chloroplast. In terms of biological role, binds 5S rRNA, forms part of the central protuberance of the 50S subunit. This Rhodomonas salina (Cryptomonas salina) protein is Large ribosomal subunit protein uL5c (rpl5).